We begin with the raw amino-acid sequence, 550 residues long: Amino acid transporter AVT1C (550 aa).

The segment covering 1 to 11 (MNHVPSDQSFY) has biased composition (polar residues). Disordered stretches follow at residues 1-44 (MNHV…ENQA) and 128-148 (QGLL…EKSS). Residues 20–34 (RKDYVEEDGGSHSDS) are compositionally biased toward basic and acidic residues. 11 helical membrane passes run 165–185 (AVLN…PYAA), 190–210 (WLGL…GILL), 237–257 (IFVS…YIIL), 283–303 (LFAL…DLSV), 307–327 (ISAG…WIGL), 342–362 (LSTL…HAVF), 377–397 (AVLL…AVMG), 422–442 (IAVW…ISPV), 462–484 (IGIR…FFGL), 488–510 (LIGS…LSIV), and 521–541 (LCVL…YSAL).

The protein belongs to the amino acid/polyamine transporter 2 family. Amino acid/auxin permease (AAAP) (TC 2.A.18.5) subfamily.

It localises to the membrane. This is Amino acid transporter AVT1C from Arabidopsis thaliana (Mouse-ear cress).